Consider the following 485-residue polypeptide: UDP-N-acetylmuramate--L-alanine ligase (485 aa).

120–126 (GSHGKTT) contacts ATP.

This sequence belongs to the MurCDEF family.

Its subcellular location is the cytoplasm. It catalyses the reaction UDP-N-acetyl-alpha-D-muramate + L-alanine + ATP = UDP-N-acetyl-alpha-D-muramoyl-L-alanine + ADP + phosphate + H(+). Its pathway is cell wall biogenesis; peptidoglycan biosynthesis. In terms of biological role, cell wall formation. The polypeptide is UDP-N-acetylmuramate--L-alanine ligase (Rickettsia rickettsii (strain Iowa)).